The sequence spans 415 residues: Adipocyte plasma membrane-associated protein (415 aa).

The Cytoplasmic segment spans residues 1–39 (MNEPEGLRFRRLNRPHIITDETHEPQYKATSTYSGKVFR). A helical membrane pass occupies residues 40–60 (VTLLTMVAFLLLPLLVVVFVL). The Extracellular segment spans residues 61–412 (ESPIQPEVFS…RSPYLCKLDL (352 aa)). The N-linked (GlcNAc...) asparagine glycan is linked to Asn-159.

It belongs to the strictosidine synthase family.

The protein localises to the membrane. The chain is Adipocyte plasma membrane-associated protein (apmap) from Danio rerio (Zebrafish).